A 65-amino-acid polypeptide reads, in one-letter code: MPKLKTRRSAAKRFKRSGSGKFMRRKAYKNHLLEHKGPDRKSRLSKKCVVSEQDAENVRAMMPYS.

The protein belongs to the bacterial ribosomal protein bL35 family.

The protein is Large ribosomal subunit protein bL35 of Acaryochloris marina (strain MBIC 11017).